The chain runs to 134 residues: NAD(P)H-quinone oxidoreductase subunit 3 (134 aa).

The next 3 membrane-spanning stretches (helical) occupy residues 20–40, 78–98, and 103–123; these read GYDAFLGFLLVSAAVPILALV, MFALVFVIFDVETVFLYPWAV, and LGLLAFIEALIFIAILLVALA.

This sequence belongs to the complex I subunit 3 family. NDH-1 can be composed of about 15 different subunits; different subcomplexes with different compositions have been identified which probably have different functions.

The protein resides in the cellular thylakoid membrane. It carries out the reaction a plastoquinone + NADH + (n+1) H(+)(in) = a plastoquinol + NAD(+) + n H(+)(out). The catalysed reaction is a plastoquinone + NADPH + (n+1) H(+)(in) = a plastoquinol + NADP(+) + n H(+)(out). Its function is as follows. NDH-1 shuttles electrons from an unknown electron donor, via FMN and iron-sulfur (Fe-S) centers, to quinones in the respiratory and/or the photosynthetic chain. The immediate electron acceptor for the enzyme in this species is believed to be plastoquinone. Couples the redox reaction to proton translocation, and thus conserves the redox energy in a proton gradient. Cyanobacterial NDH-1 also plays a role in inorganic carbon-concentration. The polypeptide is NAD(P)H-quinone oxidoreductase subunit 3 (Prochlorococcus marinus (strain MIT 9303)).